A 492-amino-acid chain; its full sequence is PTS system N-acetylmuramic acid-specific EIIBC component (492 aa).

The PTS EIIB type-1 domain maps to 1-89 (MAKINQSVIA…NELLNSSTPT (89 aa)). The active-site Phosphocysteine intermediate; for EIIB activity is Cys-28. In terms of domain architecture, PTS EIIC type-1 spans 123–487 (TKFATIFTPL…KKIEVLKADV (365 aa)). Helical transmembrane passes span 125–145 (FATI…LLGF), 167–187 (IIGY…ILIG), 193–213 (AFGG…LSYN), 227–247 (FFGY…AAIL), 265–285 (MILT…IFIM), 311–331 (ILAG…FVPV), 344–364 (LFPI…ALYV), 378–398 (GAII…VTLP), 403–423 (FITA…IAYL), and 450–470 (IFVG…SGFV).

Its subcellular location is the cell inner membrane. It carries out the reaction N-acetyl-beta-D-muramate(out) + N(pros)-phospho-L-histidyl-[protein] = N-acetyl-beta-D-muramate 6-phosphate(in) + L-histidyl-[protein]. Its function is as follows. The phosphoenolpyruvate-dependent sugar phosphotransferase system (sugar PTS), a major carbohydrate active transport system, catalyzes the phosphorylation of incoming sugar substrates concomitantly with their translocation across the cell membrane. This system is involved in N-acetylmuramic acid (MurNAc) transport, yielding cytoplasmic MurNAc-6-P. Is also able to take up anhydro-N-acetylmuramic acid (anhMurNAc), but cannot phosphorylate the carbon 6, probably because of the 1,6-anhydro ring. This chain is PTS system N-acetylmuramic acid-specific EIIBC component (murP), found in Photorhabdus laumondii subsp. laumondii (strain DSM 15139 / CIP 105565 / TT01) (Photorhabdus luminescens subsp. laumondii).